The sequence spans 289 residues: Toxin tox21A (289 aa).

An N-terminal signal peptide occupies residues Met1–Ala14. A propeptide spanning residues Ala15–Ile27 is cleaved from the precursor. The interval Asp270 to Cys289 is disordered.

Contains several disulfide bonds. Posterior glands which appear to be connected with the stylet through a series of ducts.

The protein resides in the secreted. Functionally, has contracting-paralyzing activity in insect larvae. The polypeptide is Toxin tox21A (Pyemotes tritici (Straw itch mite)).